The following is a 1437-amino-acid chain: FYVE and coiled-coil domain-containing protein 1 (1437 aa).

A2 carries the post-translational modification N-acetylalanine. Residues 4–30 (SSTETQLQRIIRDLQDAATELSHEFKE) are a coiled coil. One can recognise an RUN domain in the interval 36–169 (TDDSTSLHKF…VQFDLAPRGY (134 aa)). Position 196 is a phosphoserine (S196). Coiled-coil stretches lie at residues 223 to 270 (SLNN…VSRQ), 305 to 846 (SQAT…SEGA), and 873 to 1110 (ALTA…KDAL). T372 bears the Phosphothreonine mark. Position 837 is a phosphoserine (S837). The segment at 1132–1190 (DMEVNHCHDCKREFSWIVRRHHCRICGRIFCYYCCNNYVVTKPSGKKERCCRACFQKFG) adopts an FYVE-type zinc-finger fold. Residues C1138, C1141, C1154, C1157, C1162, C1165, C1182, and C1185 each coordinate Zn(2+). Disordered regions lie at residues 1191-1227 (EGSG…SQGI) and 1253-1289 (SGSS…TEDV). Residues 1194–1206 (GSNDSSGSGTSQG) are compositionally biased toward low complexity. Composition is skewed to polar residues over residues 1218 to 1227 (SPQSIGSQGI) and 1253 to 1283 (SGSS…SLTP). A GOLD domain is found at 1296-1425 (EICLLKSGEL…SKKVLYHLTV (130 aa)).

Can form homodimers. Interacts (via C-terminus) with MAP1LC3B. Interacts with RAB7A; the interaction with RAB7A induces FYCO1 recruitment to late endosomal/lysosomal compartments. As to expression, expressed in heart and testis. Expressed in the eye lens.

It is found in the cytoplasmic vesicle. It localises to the autophagosome. Its subcellular location is the endosome. The protein localises to the lysosome. Functionally, may mediate microtubule plus end-directed vesicle transport. The chain is FYVE and coiled-coil domain-containing protein 1 (Fyco1) from Mus musculus (Mouse).